The primary structure comprises 245 residues: 2-C-methyl-D-erythritol 4-phosphate cytidylyltransferase (245 aa).

The protein belongs to the IspD/TarI cytidylyltransferase family. IspD subfamily.

It carries out the reaction 2-C-methyl-D-erythritol 4-phosphate + CTP + H(+) = 4-CDP-2-C-methyl-D-erythritol + diphosphate. It functions in the pathway isoprenoid biosynthesis; isopentenyl diphosphate biosynthesis via DXP pathway; isopentenyl diphosphate from 1-deoxy-D-xylulose 5-phosphate: step 2/6. In terms of biological role, catalyzes the formation of 4-diphosphocytidyl-2-C-methyl-D-erythritol from CTP and 2-C-methyl-D-erythritol 4-phosphate (MEP). The sequence is that of 2-C-methyl-D-erythritol 4-phosphate cytidylyltransferase from Chloroherpeton thalassium (strain ATCC 35110 / GB-78).